We begin with the raw amino-acid sequence, 127 residues long: Small ribosomal subunit protein bS6 (127 aa).

The interval 102-127 (IMQGAEKGKSSRKEKVDAEAEASEEA) is disordered. Residues 107–119 (EKGKSSRKEKVDA) show a composition bias toward basic and acidic residues.

This sequence belongs to the bacterial ribosomal protein bS6 family.

In terms of biological role, binds together with bS18 to 16S ribosomal RNA. This Coxiella burnetii (strain CbuK_Q154) (Coxiella burnetii (strain Q154)) protein is Small ribosomal subunit protein bS6.